Consider the following 334-residue polypeptide: Holliday junction branch migration complex subunit RuvB (334 aa).

Positions Ala4–Tyr184 are large ATPase domain (RuvB-L). ATP-binding positions include Ile23, Arg24, Gly65, Lys68, Thr69, Thr70, Glu131–Tyr133, Arg174, Tyr184, and Arg221. Thr69 is a binding site for Mg(2+). The tract at residues Gln185–Asn255 is small ATPAse domain (RuvB-S). Positions Ala258–Glu334 are head domain (RuvB-H). 3 residues coordinate DNA: Arg294, Arg313, and Arg318.

Belongs to the RuvB family. As to quaternary structure, homohexamer. Forms an RuvA(8)-RuvB(12)-Holliday junction (HJ) complex. HJ DNA is sandwiched between 2 RuvA tetramers; dsDNA enters through RuvA and exits via RuvB. An RuvB hexamer assembles on each DNA strand where it exits the tetramer. Each RuvB hexamer is contacted by two RuvA subunits (via domain III) on 2 adjacent RuvB subunits; this complex drives branch migration. In the full resolvosome a probable DNA-RuvA(4)-RuvB(12)-RuvC(2) complex forms which resolves the HJ.

Its subcellular location is the cytoplasm. It carries out the reaction ATP + H2O = ADP + phosphate + H(+). Functionally, the RuvA-RuvB-RuvC complex processes Holliday junction (HJ) DNA during genetic recombination and DNA repair, while the RuvA-RuvB complex plays an important role in the rescue of blocked DNA replication forks via replication fork reversal (RFR). RuvA specifically binds to HJ cruciform DNA, conferring on it an open structure. The RuvB hexamer acts as an ATP-dependent pump, pulling dsDNA into and through the RuvAB complex. RuvB forms 2 homohexamers on either side of HJ DNA bound by 1 or 2 RuvA tetramers; 4 subunits per hexamer contact DNA at a time. Coordinated motions by a converter formed by DNA-disengaged RuvB subunits stimulates ATP hydrolysis and nucleotide exchange. Immobilization of the converter enables RuvB to convert the ATP-contained energy into a lever motion, pulling 2 nucleotides of DNA out of the RuvA tetramer per ATP hydrolyzed, thus driving DNA branch migration. The RuvB motors rotate together with the DNA substrate, which together with the progressing nucleotide cycle form the mechanistic basis for DNA recombination by continuous HJ branch migration. Branch migration allows RuvC to scan DNA until it finds its consensus sequence, where it cleaves and resolves cruciform DNA. This Yersinia enterocolitica serotype O:8 / biotype 1B (strain NCTC 13174 / 8081) protein is Holliday junction branch migration complex subunit RuvB.